The following is a 420-amino-acid chain: Probable aminotransferase aclI (420 aa).

Position 264 is an N6-(pyridoxal phosphate)lysine (Lys264).

It belongs to the class-I pyridoxal-phosphate-dependent aminotransferase family. Pyridoxal 5'-phosphate serves as cofactor.

It participates in mycotoxin biosynthesis. In terms of biological role, probable aminotransferase; part of the gene cluster that mediates the biosynthesis of aspirochlorine (or antibiotic A30641), an unusual halogenated spiro compound with distinctive antifungal properties due to selective inhibition of protein biosynthesis, and which is also active against bacteria, viruses, and murine tumor cells. The non-ribosomal peptide synthetase (NRPS) aclP is responsible the formation of the diketopiperazine (DKP) core from the condensation of 2 phenylalanine residues. One Phe residue is tailored into chlorotyrosine by hydroxylation and chlorination, whereas the second Phe undergoes an unprecedented C-C bond cleavage to be converted into glycine. After formation of the DKP, sulfur is incorporated into the DKP by conjugation with glutathione by aclG, followed by its stepwise degradation to the thiol by aclI, aclJ and aclK, and the dithiol oxidation by aclT. In addition, oxygenases (aclB, aclC, aclL and aclO) and O-methyltransferases (aclM and aclU) act as tailoring enzymes to produce the intermediate dechloroaspirochlorine. Ultimately, chlorination of dechloroaspirochlorine by the halogenase aclH is the last step in the aspirochlorine pathway. In Aspergillus oryzae (strain ATCC 42149 / RIB 40) (Yellow koji mold), this protein is Probable aminotransferase aclI.